Here is a 1069-residue protein sequence, read N- to C-terminus: Degenerin-like protein del-10 (1069 aa).

Residues 1-95 (MVRMAERLAE…LNAASPVTRG (95 aa)) lie on the Cytoplasmic side of the membrane. The chain crosses the membrane as a helical span at residues 96 to 116 (LWCMIIIAFVILVLVQCYSQI). The Extracellular segment spans residues 117–830 (KLYISEPVAT…FWSLACDIGG (714 aa)). 7 N-linked (GlcNAc...) asparagine glycosylation sites follow: Asn216, Asn290, Asn374, Asn454, Asn539, Asn545, and Asn584. Residues 831-851 (ALGLFLGASLLTIIEIVYLCI) form a helical membrane-spanning segment. Residues 852–1069 (QYGLCGKRAR…EEDDDKHSYV (218 aa)) are Cytoplasmic-facing. Disordered stretches follow at residues 898–948 (KKSQ…TLTP) and 960–1069 (RNSQ…HSYV). The segment covering 915–928 (GDKFRSRASSEESK) has biased composition (basic and acidic residues). Over residues 938-948 (NDPSGNSTLTP) the composition is skewed to polar residues. Positions 967 to 978 (YHDDHHPEDHYY) are enriched in basic and acidic residues.

This sequence belongs to the amiloride-sensitive sodium channel (TC 1.A.6) family.

It localises to the membrane. The protein is Degenerin-like protein del-10 of Caenorhabditis elegans.